Here is a 145-residue protein sequence, read N- to C-terminus: RxLR effector protein BLR40 (145 aa).

Positions Met-1 to Thr-22 are cleaved as a signal peptide. Positions Arg-44 to Arg-58 match the RxLR-dEER motif.

This sequence belongs to the RxLR effector family.

The protein resides in the secreted. Its subcellular location is the host cell membrane. In terms of biological role, secreted effector that triggers a robust hypersensitive response (HR) in Lactuca sativa cv. Design that is resistant to multiple B.lactucae races, including Bl:24. The sequence is that of RxLR effector protein BLR40 from Bremia lactucae (Lettuce downy mildew).